A 502-amino-acid polypeptide reads, in one-letter code: Cysteine--tRNA ligase (502 aa).

C30 is a binding site for Zn(2+). The 'HIGH' region motif lies at 32-42; it reads PTIYDYAHIGN. Zn(2+) is bound by residues C224, H263, and E267. Positions 296-300 match the 'KMSKS' region motif; the sequence is KMSKS. K299 lines the ATP pocket.

It belongs to the class-I aminoacyl-tRNA synthetase family. In terms of assembly, monomer. It depends on Zn(2+) as a cofactor.

The protein localises to the cytoplasm. It carries out the reaction tRNA(Cys) + L-cysteine + ATP = L-cysteinyl-tRNA(Cys) + AMP + diphosphate. This Bartonella quintana (strain Toulouse) (Rochalimaea quintana) protein is Cysteine--tRNA ligase.